Reading from the N-terminus, the 437-residue chain is Epsilon-sarcoglycan (437 aa).

Residues 1–317 lie on the Extracellular side of the membrane; it reads MQLPWWWELG…LKSRDYYTDF (317 aa). N200 carries an N-linked (GlcNAc...) asparagine glycan. The helical transmembrane segment at 318–338 threads the bilayer; it reads LVTLAVPSAVALVLFLILAYI. At 339–437 the chain is on the cytoplasmic side; that stretch reads MCCRREGVEK…QQQTTGKWYS (99 aa). Residues 418-437 are disordered; the sequence is QNLPHQTQIPQQQTTGKWYS.

Belongs to the sarcoglycan alpha/epsilon family. Post-translationally, N-glycosylated. Ubiquitinated, leading to its degradation by the proteasome.

It localises to the cell membrane. The protein localises to the sarcolemma. Its subcellular location is the cytoplasm. The protein resides in the cytoskeleton. It is found in the cell projection. It localises to the dendrite. The protein localises to the golgi apparatus. In terms of biological role, component of the sarcoglycan complex, a subcomplex of the dystrophin-glycoprotein complex which forms a link between the F-actin cytoskeleton and the extracellular matrix. The polypeptide is Epsilon-sarcoglycan (SGCE) (Bos taurus (Bovine)).